We begin with the raw amino-acid sequence, 259 residues long: Hydroxyethylthiazole kinase 1 (259 aa).

M38 lines the substrate pocket. Residues R113 and S158 each coordinate ATP. G185 serves as a coordination point for substrate.

It belongs to the Thz kinase family. Requires Mg(2+) as cofactor.

The enzyme catalyses 5-(2-hydroxyethyl)-4-methylthiazole + ATP = 4-methyl-5-(2-phosphooxyethyl)-thiazole + ADP + H(+). The protein operates within cofactor biosynthesis; thiamine diphosphate biosynthesis; 4-methyl-5-(2-phosphoethyl)-thiazole from 5-(2-hydroxyethyl)-4-methylthiazole: step 1/1. In terms of biological role, catalyzes the phosphorylation of the hydroxyl group of 4-methyl-5-beta-hydroxyethylthiazole (THZ). The sequence is that of Hydroxyethylthiazole kinase 1 from Leuconostoc mesenteroides subsp. mesenteroides (strain ATCC 8293 / DSM 20343 / BCRC 11652 / CCM 1803 / JCM 6124 / NCDO 523 / NBRC 100496 / NCIMB 8023 / NCTC 12954 / NRRL B-1118 / 37Y).